The following is a 178-amino-acid chain: Small ribosomal subunit protein uS4 (178 aa).

An S4 RNA-binding domain is found at 104–166 (RRLQTIVYRK…PNSPMASENH (63 aa)). Residues 158–178 (NSPMASENHPERTAAVSEENQ) are disordered.

It belongs to the universal ribosomal protein uS4 family. In terms of assembly, part of the 30S ribosomal subunit. Contacts protein S5. The interaction surface between S4 and S5 is involved in control of translational fidelity.

One of the primary rRNA binding proteins, it binds directly to 16S rRNA where it nucleates assembly of the body of the 30S subunit. Its function is as follows. With S5 and S12 plays an important role in translational accuracy. In Methanococcus maripaludis (strain C6 / ATCC BAA-1332), this protein is Small ribosomal subunit protein uS4.